The primary structure comprises 767 residues: V-set and immunoglobulin domain-containing protein 10-like 2 (767 aa).

An N-terminal signal peptide occupies residues 1–28 (MVGQRAQHSPVSLLLLIHLCLLHLRASG). Ig-like domains are found at residues 34 to 140 (PEAP…SHLT), 150 to 234 (PQVR…AFLD), and 242 to 324 (PVIT…TTVQ). Cystine bridges form between Cys-56-Cys-122, Cys-169-Cys-217, and Cys-268-Cys-308. A glycan (N-linked (GlcNAc...) asparagine) is linked at Asn-376. Ig-like domains follow at residues 399 to 499 (PALA…LQLE) and 501 to 593 (PQLD…VLLE). Intrachain disulfides connect Cys-435/Cys-481 and Cys-522/Cys-577. Positions 599–699 (APPNVTISRL…EVKIPADPPF (101 aa)) constitute a Fibronectin type-III domain. Residues Asn-602 and Asn-628 are each glycosylated (N-linked (GlcNAc...) asparagine). A helical transmembrane segment spans residues 704–724 (AVLGAAGTGMVVATVASLLVF). The tract at residues 735–754 (PRLETPTTTPGLDPAQETTD) is disordered. Over residues 739 to 754 (TPTTTPGLDPAQETTD) the composition is skewed to polar residues.

The protein resides in the membrane. This is V-set and immunoglobulin domain-containing protein 10-like 2 from Homo sapiens (Human).